Reading from the N-terminus, the 36-residue chain is Photosystem I reaction center subunit VIII (36 aa).

A helical membrane pass occupies residues 4-24 (FSLPSILVPLVGLVLPAIAMA).

It belongs to the PsaI family.

The protein localises to the plastid. Its subcellular location is the chloroplast thylakoid membrane. In terms of biological role, may help in the organization of the PsaL subunit. The sequence is that of Photosystem I reaction center subunit VIII from Piper cenocladum (Ant piper).